The sequence spans 195 residues: Imidazoleglycerol-phosphate dehydratase (195 aa).

Belongs to the imidazoleglycerol-phosphate dehydratase family.

Its subcellular location is the cytoplasm. The enzyme catalyses D-erythro-1-(imidazol-4-yl)glycerol 3-phosphate = 3-(imidazol-4-yl)-2-oxopropyl phosphate + H2O. Its pathway is amino-acid biosynthesis; L-histidine biosynthesis; L-histidine from 5-phospho-alpha-D-ribose 1-diphosphate: step 6/9. The chain is Imidazoleglycerol-phosphate dehydratase from Bordetella avium (strain 197N).